Reading from the N-terminus, the 126-residue chain is Small ribosomal subunit protein uS12 (126 aa).

Residues 1–23 (MPTISQLVRKGRKTVASKSTAPA) are disordered. The residue at position 89 (aspartate 89) is a 3-methylthioaspartic acid.

The protein belongs to the universal ribosomal protein uS12 family. In terms of assembly, part of the 30S ribosomal subunit. Contacts proteins S8 and S17. May interact with IF1 in the 30S initiation complex.

In terms of biological role, with S4 and S5 plays an important role in translational accuracy. Functionally, interacts with and stabilizes bases of the 16S rRNA that are involved in tRNA selection in the A site and with the mRNA backbone. Located at the interface of the 30S and 50S subunits, it traverses the body of the 30S subunit contacting proteins on the other side and probably holding the rRNA structure together. The combined cluster of proteins S8, S12 and S17 appears to hold together the shoulder and platform of the 30S subunit. This chain is Small ribosomal subunit protein uS12, found in Clostridium perfringens (strain ATCC 13124 / DSM 756 / JCM 1290 / NCIMB 6125 / NCTC 8237 / Type A).